The chain runs to 123 residues: uncharacterized protein (123 aa).

The helical transmembrane segment at 1–21 (MHIIAKSILLMAVSFLVIIFT) threads the bilayer.

The protein resides in the membrane. This is an uncharacterized protein from Methanocaldococcus jannaschii (strain ATCC 43067 / DSM 2661 / JAL-1 / JCM 10045 / NBRC 100440) (Methanococcus jannaschii).